Consider the following 454-residue polypeptide: Mitochondrial dynamics protein MID49 (454 aa).

At 1–22 (MAEFSQKRGKRRSDEGLGSMVD) the chain is on the mitochondrial intermembrane side. Serine 13 bears the Phosphoserine mark. The chain crosses the membrane as a helical span at residues 23–43 (FLLANARLVLGVGGAAVLGIA). Residues 44 to 454 (TLAVKRFIDR…SGLQEPEGLL (411 aa)) lie on the Cytoplasmic side of the membrane. A disordered region spans residues 76 to 119 (ATPHLQPRPPPAALSQPVLPLAPSSSAPEGPAETDPEVTPQLSS). The segment covering 88 to 103 (ALSQPVLPLAPSSSAP) has biased composition (low complexity).

It belongs to the MID49/MID51 family. In terms of assembly, interacts with DNM1L. Expressed in all tissues tested with highest expression in heart and skeletal muscle.

Its subcellular location is the mitochondrion outer membrane. Its function is as follows. Mitochondrial outer membrane protein involved in the regulation of mitochondrial organization. It is required for mitochondrial fission and promotes the recruitment and association of the fission mediator dynamin-related protein 1 (DNM1L) to the mitochondrial surface independently of the mitochondrial fission FIS1 and MFF proteins. Regulates DNM1L GTPase activity. The sequence is that of Mitochondrial dynamics protein MID49 (MIEF2) from Homo sapiens (Human).